The sequence spans 233 residues: Orotidine 5'-phosphate decarboxylase (233 aa).

Residues D13, K35, 62–71 (DLKFHDIPNT), T122, R182, Q191, G211, and R212 contribute to the substrate site. K64 (proton donor) is an active-site residue.

Belongs to the OMP decarboxylase family. Type 1 subfamily. Homodimer.

The catalysed reaction is orotidine 5'-phosphate + H(+) = UMP + CO2. It functions in the pathway pyrimidine metabolism; UMP biosynthesis via de novo pathway; UMP from orotate: step 2/2. Its function is as follows. Catalyzes the decarboxylation of orotidine 5'-monophosphate (OMP) to uridine 5'-monophosphate (UMP). In Pseudomonas putida (strain ATCC 700007 / DSM 6899 / JCM 31910 / BCRC 17059 / LMG 24140 / F1), this protein is Orotidine 5'-phosphate decarboxylase.